The primary structure comprises 161 residues: Short form salivary protein D7S (161 aa).

Residues 1–18 (MKFPSILLAILLFKPITA) form the signal peptide. 3 disulfides stabilise this stretch: C33/C67, C47/C155, and C109/C125.

It belongs to the PBP/GOBP family.

It is found in the secreted. Functionally, in contrast to the related D7 salivary proteins, does not bind serotonin. This chain is Short form salivary protein D7S, found in Culex quinquefasciatus (Southern house mosquito).